The chain runs to 165 residues: Cyclic pyranopterin monophosphate synthase (165 aa).

Substrate contacts are provided by residues 83–85 (FCH) and 120–121 (ME). The active site involves D135.

It belongs to the MoaC family. In terms of assembly, homohexamer; trimer of dimers.

The catalysed reaction is (8S)-3',8-cyclo-7,8-dihydroguanosine 5'-triphosphate = cyclic pyranopterin phosphate + diphosphate. Its pathway is cofactor biosynthesis; molybdopterin biosynthesis. Functionally, catalyzes the conversion of (8S)-3',8-cyclo-7,8-dihydroguanosine 5'-triphosphate to cyclic pyranopterin monophosphate (cPMP). The sequence is that of Cyclic pyranopterin monophosphate synthase from Xanthomonas campestris pv. campestris (strain 8004).